The following is a 159-amino-acid chain: NADH-quinone oxidoreductase subunit B (159 aa).

[4Fe-4S] cluster-binding residues include Cys36, Cys37, Cys102, and Cys132.

Belongs to the complex I 20 kDa subunit family. As to quaternary structure, NDH-1 is composed of 14 different subunits. Subunits NuoB, C, D, E, F, and G constitute the peripheral sector of the complex. It depends on [4Fe-4S] cluster as a cofactor.

The protein resides in the cell inner membrane. It catalyses the reaction a quinone + NADH + 5 H(+)(in) = a quinol + NAD(+) + 4 H(+)(out). In terms of biological role, NDH-1 shuttles electrons from NADH, via FMN and iron-sulfur (Fe-S) centers, to quinones in the respiratory chain. Couples the redox reaction to proton translocation (for every two electrons transferred, four hydrogen ions are translocated across the cytoplasmic membrane), and thus conserves the redox energy in a proton gradient. The chain is NADH-quinone oxidoreductase subunit B from Paracidovorax citrulli (strain AAC00-1) (Acidovorax citrulli).